The following is a 225-amino-acid chain: tRNA (guanine-N(7)-)-methyltransferase (225 aa).

S-adenosyl-L-methionine is bound by residues E56, E81, D108, and D131. D131 is a catalytic residue. Residues K135, D167, and 204-207 (TKFE) contribute to the substrate site.

The protein belongs to the class I-like SAM-binding methyltransferase superfamily. TrmB family.

The enzyme catalyses guanosine(46) in tRNA + S-adenosyl-L-methionine = N(7)-methylguanosine(46) in tRNA + S-adenosyl-L-homocysteine. It participates in tRNA modification; N(7)-methylguanine-tRNA biosynthesis. Catalyzes the formation of N(7)-methylguanine at position 46 (m7G46) in tRNA. The sequence is that of tRNA (guanine-N(7)-)-methyltransferase from Legionella pneumophila (strain Corby).